The following is a 109-amino-acid chain: Staphostatin B (109 aa).

The binds to staphopain B stretch occupies residues 97-101 (IGTSR).

It belongs to the protease inhibitor I57 (SspC) family. As to quaternary structure, forms a stable non-covalent complex with prematurely activated/folded SspB.

Its subcellular location is the cytoplasm. Its function is as follows. Specifically inhibits the cysteine protease staphopain B (SspB) by blocking the active site of the enzyme. Probably required to protect cytoplasmic proteins from being degraded by prematurely activated/folded prostaphopain B. Also involved in growth capacity, viability and bacterial morphology. This chain is Staphostatin B (sspC), found in Staphylococcus aureus (strain NCTC 8325 / PS 47).